Reading from the N-terminus, the 634-residue chain is NRPS-independent siderophore synthetase rfs (634 aa).

NRPS-independent siderophore synthetase that catalyzes the rhizoferrin biosynthesis from citrate and diaminobutane via an ATP-dependent condensation of citrate with diaminobutane followed by the addition of a second citrate to the monocitryl-diaminobutane intermediate. Can also use as substrates the citrate and diaminobutane homologs oxaloacetic acid, diaminopropane, diaminobutane, diaminopentane, tricarballylic acid, hydroxylamine and ornithine. Forms only a mono-substituted intermediate with oxaloacetic acid and diaminopentane whereas both mono-citryl intermediates and full rhizoferrin derivatives were detected when diaminopropane, and ornithine were used as substrates. Tricarballylic acid only forms a rhizoferrin derivative, but no mono-substituted intermediate. This Rhizopus delemar (strain RA 99-880 / ATCC MYA-4621 / FGSC 9543 / NRRL 43880) (Mucormycosis agent) protein is NRPS-independent siderophore synthetase rfs.